The primary structure comprises 94 residues: Pyrimidine/purine nucleoside phosphorylase (94 aa).

Belongs to the nucleoside phosphorylase PpnP family.

The enzyme catalyses a purine D-ribonucleoside + phosphate = a purine nucleobase + alpha-D-ribose 1-phosphate. It carries out the reaction adenosine + phosphate = alpha-D-ribose 1-phosphate + adenine. It catalyses the reaction cytidine + phosphate = cytosine + alpha-D-ribose 1-phosphate. The catalysed reaction is guanosine + phosphate = alpha-D-ribose 1-phosphate + guanine. The enzyme catalyses inosine + phosphate = alpha-D-ribose 1-phosphate + hypoxanthine. It carries out the reaction thymidine + phosphate = 2-deoxy-alpha-D-ribose 1-phosphate + thymine. It catalyses the reaction uridine + phosphate = alpha-D-ribose 1-phosphate + uracil. The catalysed reaction is xanthosine + phosphate = alpha-D-ribose 1-phosphate + xanthine. Catalyzes the phosphorolysis of diverse nucleosides, yielding D-ribose 1-phosphate and the respective free bases. Can use uridine, adenosine, guanosine, cytidine, thymidine, inosine and xanthosine as substrates. Also catalyzes the reverse reactions. This Pseudomonas fluorescens (strain Pf0-1) protein is Pyrimidine/purine nucleoside phosphorylase.